Here is a 160-residue protein sequence, read N- to C-terminus: MTTRVIYPGTFDPITNGHLDLIERAAAMFDTVIVGVAYNPTKKPLFDLNERVALAQSVTQHLPNVEIVGFSGLLVNFAKEHNANVLVRGLRAVSDFEYEFQLANMNRRLMPELETVFLTPAEENSFISSTIVKEVALHKGDVSQFVPNQISQALNKKLFA.

T10 contacts substrate. Residues 10–11 and H18 each bind ATP; that span reads TF. The substrate site is built by K42, L74, and R88. ATP contacts are provided by residues 89–91, E99, and 124–130; these read GLR and NSFISST.

This sequence belongs to the bacterial CoaD family. In terms of assembly, homohexamer. Mg(2+) serves as cofactor.

Its subcellular location is the cytoplasm. The catalysed reaction is (R)-4'-phosphopantetheine + ATP + H(+) = 3'-dephospho-CoA + diphosphate. It participates in cofactor biosynthesis; coenzyme A biosynthesis; CoA from (R)-pantothenate: step 4/5. In terms of biological role, reversibly transfers an adenylyl group from ATP to 4'-phosphopantetheine, yielding dephospho-CoA (dPCoA) and pyrophosphate. The polypeptide is Phosphopantetheine adenylyltransferase (Photobacterium damsela subsp. piscicida (Pasteurella piscicida)).